The chain runs to 271 residues: Extracellular metalloprotease TRV_06892 (271 aa).

Residues 1–19 (MRFSVLLTGLAAAGSIATA) form the signal peptide. N136 carries an N-linked (GlcNAc...) asparagine glycan. H185 provides a ligand contact to Zn(2+). The active site involves E186. H189 provides a ligand contact to Zn(2+). N-linked (GlcNAc...) asparagine glycosylation is present at N200. C222 and C248 are disulfide-bonded.

This sequence belongs to the peptidase M43B family.

It is found in the secreted. Functionally, secreted metalloproteinase that allows assimilation of proteinaceous substrates. Plays a pivotal role as a pathogenicity determinant during infections and contributes to the ability of the pathogen to persist within the mammalian host. This is Extracellular metalloprotease TRV_06892 from Trichophyton verrucosum (strain HKI 0517).